We begin with the raw amino-acid sequence, 98 residues long: Large ribosomal subunit protein uL23 (98 aa).

Belongs to the universal ribosomal protein uL23 family. As to quaternary structure, part of the 50S ribosomal subunit. Contacts protein L29, and trigger factor when it is bound to the ribosome.

One of the early assembly proteins it binds 23S rRNA. One of the proteins that surrounds the polypeptide exit tunnel on the outside of the ribosome. Forms the main docking site for trigger factor binding to the ribosome. This chain is Large ribosomal subunit protein uL23, found in Clostridium botulinum (strain Eklund 17B / Type B).